A 170-amino-acid polypeptide reads, in one-letter code: Cilia- and flagella-associated protein 276 (170 aa).

Disordered stretches follow at residues 1 to 37 (MPLTRDPFQNPALDKDDSYLGKSRASKKLPYKNPTHL) and 151 to 170 (HTAATNGGYSRKNDGGFFST).

As to quaternary structure, microtubule inner protein component of sperm flagellar doublet microtubules. In terms of tissue distribution, expressed in trachea multiciliated cells.

The protein localises to the cytoplasm. The protein resides in the cytoskeleton. It is found in the cilium axoneme. It localises to the flagellum axoneme. Its function is as follows. Microtubule inner protein (MIP) part of the dynein-decorated doublet microtubules (DMTs) in cilia axoneme, which is required for motile cilia beating. May play an important role for the maintenance of myelin-axon integrity. May affect intracellular Ca(2+) homeostasis. The chain is Cilia- and flagella-associated protein 276 from Bos taurus (Bovine).